Reading from the N-terminus, the 202-residue chain is U-Kazal-Dg21.2 (202 aa).

A signal peptide spans 1 to 20 (MKYFLWSAVTIFAIVNVVGA). Positions 21–87 (KNSDFDPRCL…SFCQVEEDFD (67 aa)) are excised as a propeptide. Kazal-like domains follow at residues 23 to 77 (SDFD…KTLM), 85 to 140 (DFDS…ICRN), and 148 to 202 (IDPK…KGEC). Intrachain disulfides connect Cys29–Cys62, Cys33–Cys55, Cys91–Cys124, Cys95–Cys117, and Cys103–Cys138. An N-linked (GlcNAc...) asparagine glycan is attached at Asn140. A propeptide spanning residues 142–202 (SFKSELIDPK…NWTLIRKGEC (61 aa)) is cleaved from the precursor. 3 cysteine pairs are disulfide-bonded: Cys154/Cys187, Cys158/Cys180, and Cys166/Cys202. N-linked (GlcNAc...) asparagine glycosylation is present at Asn193.

In terms of tissue distribution, expressed by the venom gland.

It is found in the secreted. In terms of biological role, may act as a serine protease inhibitor, since it possess the kazal serine protease inhibitor signature. The recombinant peptide does not produce toxic effects on insects. The protein is U-Kazal-Dg21.2 of Dolopus genitalis (Giant Australian assassin fly).